Here is a 297-residue protein sequence, read N- to C-terminus: Glycerol-3-phosphate dehydrogenase [NAD(P)+] (297 aa).

NADPH-binding residues include tryptophan 11, arginine 33, and lysine 79. Residues lysine 79, glycine 107, and serine 109 each coordinate sn-glycerol 3-phosphate. Alanine 111 contributes to the NADPH binding site. Positions 161, 214, 224, 225, and 226 each coordinate sn-glycerol 3-phosphate. Lysine 161 functions as the Proton acceptor in the catalytic mechanism. Position 225 (arginine 225) interacts with NADPH. The NADPH site is built by valine 249 and glutamate 251.

This sequence belongs to the NAD-dependent glycerol-3-phosphate dehydrogenase family.

Its subcellular location is the cytoplasm. The catalysed reaction is sn-glycerol 3-phosphate + NAD(+) = dihydroxyacetone phosphate + NADH + H(+). It catalyses the reaction sn-glycerol 3-phosphate + NADP(+) = dihydroxyacetone phosphate + NADPH + H(+). It participates in membrane lipid metabolism; glycerophospholipid metabolism. In terms of biological role, catalyzes the reduction of the glycolytic intermediate dihydroxyacetone phosphate (DHAP) to sn-glycerol 3-phosphate (G3P), the key precursor for phospholipid synthesis. In Campylobacter jejuni subsp. jejuni serotype O:2 (strain ATCC 700819 / NCTC 11168), this protein is Glycerol-3-phosphate dehydrogenase [NAD(P)+].